Consider the following 87-residue polypeptide: Small ribosomal subunit protein bS20 (87 aa).

The protein belongs to the bacterial ribosomal protein bS20 family.

Functionally, binds directly to 16S ribosomal RNA. In Alkaliphilus oremlandii (strain OhILAs) (Clostridium oremlandii (strain OhILAs)), this protein is Small ribosomal subunit protein bS20.